A 300-amino-acid polypeptide reads, in one-letter code: Cation-efflux pump FieF (300 aa).

A run of 4 helical transmembrane segments spans residues 12-32 (AAIA…FAWW), 39-59 (ILAA…NLLV), 82-102 (AALA…LTSI), and 114-134 (PGVG…LVTF). Zn(2+) contacts are provided by Asp45 and Asp49. Residues His153 and Asp157 each coordinate Zn(2+). The next 2 membrane-spanning stretches (helical) occupy residues 156–176 (SDVM…YGWH) and 178–198 (ADAL…LRMG).

The protein belongs to the cation diffusion facilitator (CDF) transporter (TC 2.A.4) family. FieF subfamily. As to quaternary structure, homodimer.

The protein localises to the cell inner membrane. It carries out the reaction Zn(2+)(in) + H(+)(out) = Zn(2+)(out) + H(+)(in). The enzyme catalyses Cd(2+)(in) + H(+)(out) = Cd(2+)(out) + H(+)(in). The catalysed reaction is Fe(2+)(in) + H(+)(out) = Fe(2+)(out) + H(+)(in). Its function is as follows. Divalent metal cation transporter which exports Zn(2+), Cd(2+) and possibly Fe(2+). May be involved in zinc and iron detoxification by efflux. This is Cation-efflux pump FieF from Salmonella arizonae (strain ATCC BAA-731 / CDC346-86 / RSK2980).